A 484-amino-acid chain; its full sequence is ATP synthase subunit beta (484 aa).

162 to 169 contributes to the ATP binding site; that stretch reads GGAGVGKT.

Belongs to the ATPase alpha/beta chains family. As to quaternary structure, F-type ATPases have 2 components, CF(1) - the catalytic core - and CF(0) - the membrane proton channel. CF(1) has five subunits: alpha(3), beta(3), gamma(1), delta(1), epsilon(1). CF(0) has four main subunits: a(1), b(1), b'(1) and c(9-12).

The protein resides in the cellular thylakoid membrane. The enzyme catalyses ATP + H2O + 4 H(+)(in) = ADP + phosphate + 5 H(+)(out). Functionally, produces ATP from ADP in the presence of a proton gradient across the membrane. The catalytic sites are hosted primarily by the beta subunits. The sequence is that of ATP synthase subunit beta from Synechococcus elongatus (strain ATCC 33912 / PCC 7942 / FACHB-805) (Anacystis nidulans R2).